The following is a 278-amino-acid chain: Shikimate dehydrogenase (NADP(+)) (278 aa).

Residues 14–16 (SKS) and Thr-61 each bind shikimate. Lys-65 acts as the Proton acceptor in catalysis. The shikimate site is built by Asn-86 and Asp-102. Residues 127–131 (GAGGA), 151–156 (NRTASK), and Met-221 each bind NADP(+). Tyr-223 contacts shikimate. Gly-245 lines the NADP(+) pocket.

This sequence belongs to the shikimate dehydrogenase family. As to quaternary structure, homodimer.

The enzyme catalyses shikimate + NADP(+) = 3-dehydroshikimate + NADPH + H(+). The protein operates within metabolic intermediate biosynthesis; chorismate biosynthesis; chorismate from D-erythrose 4-phosphate and phosphoenolpyruvate: step 4/7. Involved in the biosynthesis of the chorismate, which leads to the biosynthesis of aromatic amino acids. Catalyzes the reversible NADPH linked reduction of 3-dehydroshikimate (DHSA) to yield shikimate (SA). This is Shikimate dehydrogenase (NADP(+)) from Saccharophagus degradans (strain 2-40 / ATCC 43961 / DSM 17024).